The primary structure comprises 488 residues: C2H2-type transcription factor MSN2 (488 aa).

2 C2H2-type zinc fingers span residues 376–399 and 405–427; these read FVCDLCNRRFRRQEHLKRHYRSLH and FECNECGKKFSRSDNLAQHARTH.

It localises to the nucleus. Its subcellular location is the cytoplasm. Transcription factor that acts as a key downstream transcription factor in the HOG1-MAPK pathway. Plays crucial roles in the regulation of conidiation, virulence and multi-stress responses. Acts as a negative regulator of proteases, lipases, as well as of the red-pigmented oosporein production, and contributes to virulence and growth in response to external pH. Contributes to the ability to infect Rhipicephalus microplus (Acari, Ixodidae) via the cuticle-penetration requiring route involving proteolytic activity at the host cuticle. Does not seem to be involved in subsequent growth and proliferation once the tick cuticle has been breached. This chain is C2H2-type transcription factor MSN2, found in Beauveria bassiana (strain ARSEF 2860) (White muscardine disease fungus).